A 330-amino-acid polypeptide reads, in one-letter code: 4-hydroxythreonine-4-phosphate dehydrogenase (330 aa).

Positions 136 and 137 each coordinate substrate. His166, His211, and His266 together coordinate a divalent metal cation. Substrate contacts are provided by Lys274, Asn283, and Arg292.

The protein belongs to the PdxA family. In terms of assembly, homodimer. It depends on Zn(2+) as a cofactor. Mg(2+) is required as a cofactor. Co(2+) serves as cofactor.

It is found in the cytoplasm. It catalyses the reaction 4-(phosphooxy)-L-threonine + NAD(+) = 3-amino-2-oxopropyl phosphate + CO2 + NADH. It functions in the pathway cofactor biosynthesis; pyridoxine 5'-phosphate biosynthesis; pyridoxine 5'-phosphate from D-erythrose 4-phosphate: step 4/5. Its function is as follows. Catalyzes the NAD(P)-dependent oxidation of 4-(phosphooxy)-L-threonine (HTP) into 2-amino-3-oxo-4-(phosphooxy)butyric acid which spontaneously decarboxylates to form 3-amino-2-oxopropyl phosphate (AHAP). This chain is 4-hydroxythreonine-4-phosphate dehydrogenase, found in Sodalis glossinidius (strain morsitans).